The primary structure comprises 348 residues: MKIIGIESSCDETGVAVYDTALSGSAALRAHSVYSQVALHAEYGGVVPELASRDHVRKLLPLLRQTLAEAKLSVEELDGVAYTAGPGLVGALLVGAGVARALAWALEVPAIGVHHMEGHLLSPLLEDDPPEVPFVALLVSGGHTQLVAVDAIGDYRLLGETLDDAAGEAFDKVAKLMGLPYPGGPQLAALAERGIPGRFCFTRPMVDRPGLDFSFSGLKTQVLLAWRNSDQSDAIRVDVARGFEDAVVDTLAIKCERALDTVACQTLVVAGGVGANKCLRARLQAMCRQRGGRACFPRPALCTDNGAMIAFAGALRLQAGQQSDVAVRVTPRWDMAALPPLVSRSCRR.

Residues His-115 and His-119 each contribute to the Fe cation site. Residues 138 to 142 (LVSGG), Asp-171, Gly-184, and Asn-276 each bind substrate. A Fe cation-binding site is contributed by Asp-304.

This sequence belongs to the KAE1 / TsaD family. Fe(2+) is required as a cofactor.

The protein resides in the cytoplasm. It catalyses the reaction L-threonylcarbamoyladenylate + adenosine(37) in tRNA = N(6)-L-threonylcarbamoyladenosine(37) in tRNA + AMP + H(+). Functionally, required for the formation of a threonylcarbamoyl group on adenosine at position 37 (t(6)A37) in tRNAs that read codons beginning with adenine. Is involved in the transfer of the threonylcarbamoyl moiety of threonylcarbamoyl-AMP (TC-AMP) to the N6 group of A37, together with TsaE and TsaB. TsaD likely plays a direct catalytic role in this reaction. In Xylella fastidiosa (strain M23), this protein is tRNA N6-adenosine threonylcarbamoyltransferase.